A 559-amino-acid chain; its full sequence is MKQKITDYLDEIYGGTFTATHLQKLVTRLESAKRLITQRRKKHWDESDVVLITYADQFHSNDLKPLPTFNQFYHQWLQSIFSHVHLLPFYPWSSDDGFSVIDYHQVASEAGEWQDIQQLGECSHLMFDFVCNHMSAKSEWFKNYLQQHPGFEDFFIAVDPQTDLSAVTRPRALPLLTPFQMRDHSTRHLWTTFSDDQIDLNYRSPEVLLAMVDVLLCYLAKGAEYVRLDAVGFMWKEPGTSCIHLEKTHLIIKLLRSIIDNVAPGTVIITETNVPHKDNIAYFGAGDDEAHMVYQFSLPPLVLHAVQKQNVEALCAWAQNLTLPSSNTTWFNFLASHDGIGLNPLRGLLPESEILELVEALQQEGALVNWKNNPDGTRSPYEINVTYMDALSRRESSDEERCARFILAHAILLSFPGVPAIYIQSILGSRNDYAGVEKLGYNRAINRKKYHSKEITRELNDEATLRHAVYHELSRLITLRRSHNEFHPDNNFTIDTINSSVMRIPRSNADGNCLTGLFNVSKNIQHVNITNLHGRDLISEVDILGNEITLRPWQVMWIK.

The active-site Nucleophile is the Asp-229.

It belongs to the glycosyl hydrolase 13 family. Glucosylglycerate phosphorylase subfamily.

It carries out the reaction (2R)-2-O-(alpha-D-glucopyranosyl)-glycerate + phosphate = (R)-glycerate + alpha-D-glucose 1-phosphate. Catalyzes the reversible phosphorolysis of glucosylglycerate into alpha-D-glucose 1-phosphate (Glc1P) and D-glycerate (also called (R)-glycerate). May be a regulator of intracellular levels of glucosylglycerate, a compatible solute that primarily protects organisms facing salt stress and very specific nutritional constraints. Cannot catalyze the phosphorolysis of sucrose. Does not act on other sugars such as alpha-D-galactose 1-phosphate, alpha-D-mannose 1-phosphate or beta-D-glucose 1-phosphate; in vitro D-erythronate can substitute for D-glycerate with a much lower efficiency. This chain is Glucosylglycerate phosphorylase (ycjM), found in Escherichia coli (strain K12).